The following is a 371-amino-acid chain: Zinc transporter ZIP13 (371 aa).

At 1 to 7 (MPGCPCP) the chain is on the lumenal side. Residues 8-28 (GCGMAGPRLLFLTALALELLE) traverse the membrane as a helical segment. At 29 to 68 (RAGGSQPALRSRGTATACRLDNKESESWGALLSGERLDTW) the chain is on the cytoplasmic side. A helical transmembrane segment spans residues 69–89 (ICSLLGSLMVGLSGVFPLLVI). Residues 90-108 (PLEMGTMLRSEAGAWRLKQ) are Lumenal-facing. A helical membrane pass occupies residues 109–129 (LLSFALGGLLGNVFLHLLPEA). The Cytoplasmic portion of the chain corresponds to 130-149 (WAYTCSASPGGEGQSLQQQQ). Residues 150-170 (QLGLWVIAGILTFLALEKMFL) traverse the membrane as a helical segment. At 171–235 (DSKEEGTSQA…TIDNFTHGLA (65 aa)) the chain is on the lumenal side. A helical transmembrane segment spans residues 236-256 (VAASFLVSKKIGLLTTMAILL). The XEXPHE-motif signature appears at 257–262 (HEIPHE). Residues 257-278 (HEIPHEVGDFAILLRAGFDRWS) are Cytoplasmic-facing. Residues 279-299 (AAKLQLSTALGGLLGAGFAIC) form a helical membrane-spanning segment. The Lumenal portion of the chain corresponds to 300 to 316 (TQSPKGVVGCSPAAEET). The helical transmembrane segment at 317–337 (AAWVLPFTSGGFLYIALVNVL) threads the bilayer. Residues 338–349 (PDLLEEEDPWRS) lie on the Cytoplasmic side of the membrane. The helical transmembrane segment at 350–370 (LQQLLLLCAGIVVMVLFSLFV) threads the bilayer. Position 371 (D371) is a topological domain, lumenal.

Belongs to the ZIP transporter (TC 2.A.5) family. Homodimer.

It is found in the golgi apparatus membrane. Its subcellular location is the cytoplasmic vesicle membrane. The protein localises to the endoplasmic reticulum membrane. The enzyme catalyses Zn(2+)(in) = Zn(2+)(out). In terms of biological role, functions as a zinc transporter transporting Zn(2+) from the Golgi apparatus to the cytosol and thus influences the zinc level at least in areas of the cytosol. May regulate beige adipocyte differentiation. The protein is Zinc transporter ZIP13 of Homo sapiens (Human).